We begin with the raw amino-acid sequence, 354 residues long: S-adenosylmethionine:tRNA ribosyltransferase-isomerase (354 aa).

Belongs to the QueA family. Monomer.

The protein localises to the cytoplasm. The enzyme catalyses 7-aminomethyl-7-carbaguanosine(34) in tRNA + S-adenosyl-L-methionine = epoxyqueuosine(34) in tRNA + adenine + L-methionine + 2 H(+). Its pathway is tRNA modification; tRNA-queuosine biosynthesis. Functionally, transfers and isomerizes the ribose moiety from AdoMet to the 7-aminomethyl group of 7-deazaguanine (preQ1-tRNA) to give epoxyqueuosine (oQ-tRNA). In Salmonella paratyphi C (strain RKS4594), this protein is S-adenosylmethionine:tRNA ribosyltransferase-isomerase.